The chain runs to 338 residues: Ornithine carbamoyltransferase, catabolic (338 aa).

Residues 58-61 (STRT), glutamine 85, arginine 109, and 136-139 (HPTQ) contribute to the carbamoyl phosphate site. Residues asparagine 168, aspartate 232, and 236 to 237 (SM) contribute to the L-ornithine site. Carbamoyl phosphate is bound by residues 273–274 (CL) and arginine 318.

The protein belongs to the aspartate/ornithine carbamoyltransferase superfamily. OTCase family.

It is found in the cytoplasm. The catalysed reaction is carbamoyl phosphate + L-ornithine = L-citrulline + phosphate + H(+). Its pathway is amino-acid degradation; L-arginine degradation via ADI pathway; carbamoyl phosphate from L-arginine: step 2/2. Its function is as follows. Reversibly catalyzes the transfer of the carbamoyl group from carbamoyl phosphate (CP) to the N(epsilon) atom of ornithine (ORN) to produce L-citrulline. The protein is Ornithine carbamoyltransferase, catabolic of Streptococcus gordonii (strain Challis / ATCC 35105 / BCRC 15272 / CH1 / DL1 / V288).